We begin with the raw amino-acid sequence, 234 residues long: Large ribosomal subunit protein uL1 (234 aa).

The protein belongs to the universal ribosomal protein uL1 family. As to quaternary structure, part of the 50S ribosomal subunit.

Functionally, binds directly to 23S rRNA. The L1 stalk is quite mobile in the ribosome, and is involved in E site tRNA release. In terms of biological role, protein L1 is also a translational repressor protein, it controls the translation of the L11 operon by binding to its mRNA. This Aliivibrio fischeri (strain ATCC 700601 / ES114) (Vibrio fischeri) protein is Large ribosomal subunit protein uL1.